A 378-amino-acid chain; its full sequence is MAFKSLIAFVALAAAVRAAPTAVCPDGTRVSHAACCAFIPLAQDLQETIFQNECGEDAHEVIRLTFHDAIAISRSQGPKAGGGADGSMLLFPTVEPNFSANNGIDDSVNNLIPFMQKHNTISAADLVQFAGAVALSNCPGAPRLEFLAGRPNKTIAAVDGLIPEPQDSVTKILQRFEDAGGFTPFEVVSLLASHSVARADKVDQTIDAAPFDSTPFTFDTQVFLEVLLKGVGFPGSANNTGEVASPLPLGSGSDTGEMRLQSDFALAHDPRTACIWQGFVNEQAFMAASFRAAMSKLAVLGHNRNSLIDCSDVVPVPKPATGQPAMFPASTGPQDLELSCPSERFPTLTTQPGASQSLIAHCPDGSMSCPGVQFNGPA.

The signal sequence occupies residues 1–21; that stretch reads MAFKSLIAFVALAAAVRAAPT. 5 cysteine pairs are disulfide-bonded: C24–C36, C35–C310, C54–C138, C274–C340, and C362–C369. Mn(2+) contacts are provided by E56 and E60. The Proton acceptor role is filled by H67. Ca(2+) is bound by residues D68, G83, D85, and S87. N97 and N152 each carry an N-linked (GlcNAc...) asparagine glycan. A heme b-binding site is contributed by H194. S195 is a Ca(2+) binding site. Mn(2+) is bound at residue D200. Ca(2+)-binding residues include D212, T214, T217, and D219. A glycan (N-linked (GlcNAc...) asparagine) is linked at N238.

It belongs to the peroxidase family. Ligninase subfamily. Requires Ca(2+) as cofactor. The cofactor is heme b.

The protein localises to the secreted. The enzyme catalyses 2 Mn(2+) + H2O2 + 2 H(+) = 2 Mn(3+) + 2 H2O. Its function is as follows. Catalyzes the oxidation of Mn(2+) to Mn(3+). The latter, acting as a diffusible redox mediator, is capable of oxidizing a variety of lignin compounds. In Phanerodontia chrysosporium (White-rot fungus), this protein is Manganese peroxidase 1 (MNP1).